Reading from the N-terminus, the 296-residue chain is Putative S-adenosyl-L-methionine-dependent methyltransferase MAV_4764 (296 aa).

S-adenosyl-L-methionine-binding positions include Asp121 and 150–151; that span reads DL.

It belongs to the UPF0677 family.

Its function is as follows. Exhibits S-adenosyl-L-methionine-dependent methyltransferase activity. The polypeptide is Putative S-adenosyl-L-methionine-dependent methyltransferase MAV_4764 (Mycobacterium avium (strain 104)).